The following is a 178-amino-acid chain: MGLELVTSGKNLPEEINVVIEIPKDSEPVKYEVDKASGAIFVDRILSTPMRYPCNYGYVPNTLCGDGDPADVLVVLPLPLVPGSVVRCRPVGVLRMSDEAGSDEKILAVPIEKIFSGYAHIEDIDQVSSHWMERIGHFFEHYKDLEKGKWVKLDGWGGAAEAKRILVESVERYNSDAP.

Residues Lys30, Arg44, and Tyr56 each coordinate substrate. Residues Asp66, Asp71, and Asp103 each contribute to the Mg(2+) site. Residue Tyr142 participates in substrate binding.

Belongs to the PPase family. In terms of assembly, homohexamer. It depends on Mg(2+) as a cofactor.

The protein resides in the cytoplasm. The enzyme catalyses diphosphate + H2O = 2 phosphate + H(+). Catalyzes the hydrolysis of inorganic pyrophosphate (PPi) forming two phosphate ions. In Xanthomonas campestris pv. campestris (strain ATCC 33913 / DSM 3586 / NCPPB 528 / LMG 568 / P 25), this protein is Inorganic pyrophosphatase.